The chain runs to 358 residues: Presenilin hop-1 (358 aa).

Residues 1–12 (MPRTKRVYSGKT) are Cytoplasmic-facing. The helical transmembrane segment at 13-33 (ITGVLYPVAICMLFVAINVKL) threads the bilayer. Topologically, residues 34–57 (SQPEQQEQSKVVYGLFHSYDTADS) are lumenal. Residues 58-78 (GTITLYLIGFLILTTSLGVFC) form a helical membrane-spanning segment. At 79–86 (YQMKFYKA) the chain is on the cytoplasmic side. A helical transmembrane segment spans residues 87–107 (IKVYVLANSIGILLVYSVFHF). The Lumenal portion of the chain corresponds to 108–115 (QRIAEAQS). A helical membrane pass occupies residues 116-136 (IPVSVPTFFFLILQFGGLGIT). The Cytoplasmic segment spans residues 137–148 (CLHWKSHRRLHQ). A helical membrane pass occupies residues 149-169 (FYLIMLAGLTAIFILNILPDW). A topological domain (lumenal) is located at residue Thr-170. A helical transmembrane segment spans residues 171–191 (VWMALTAISFWDIVAVLTPCG). The active site involves Asp-182. The Cytoplasmic portion of the chain corresponds to 192–273 (PLKMLVETAN…EVREVEGTIR (82 aa)). Polar residues predominate over residues 221–240 (EVDSPDTTRSNSTPLTEFNN). The disordered stretch occupies residues 221–242 (EVDSPDTTRSNSTPLTEFNNSS). The chain crosses the membrane as a helical span at residues 274-294 (LGMGDFVFYSLMLGNTVQTCP). Asp-278 is a catalytic residue. Topologically, residues 295 to 297 (LPT) are lumenal. The chain crosses the membrane as a helical span at residues 298 to 318 (VVACFVSNLVGLTITLPIVTL). Residues 319-321 (SQT) are Cytoplasmic-facing. Residues 322 to 342 (ALPALPFPLAIAAIFYFSSHI) constitute an intramembrane region (helical). The short motif at 324 to 326 (PAL) is the PAL element. Residues 343–358 (ALTPFTDLCTSQLILI) lie on the Cytoplasmic side of the membrane.

Belongs to the peptidase A22A family. Homodimer. Component of the gamma-secretase complex, a complex probably composed of the presenilin homodimer (sel-12, hop-1 or spe-4), nicastrin (aph-2), aph-1 and pen-2. In terms of tissue distribution, weakly expressed.

The protein resides in the endoplasmic reticulum membrane. It is found in the golgi apparatus membrane. Probable catalytic subunit of the gamma-secretase complex, an endoprotease complex that catalyzes the intramembrane cleavage of integral membrane proteins such as Notch receptors (lin-12 or glp-1). Probably works redundantly of lin-12, which provides more presenilin function. This chain is Presenilin hop-1 (hop-1), found in Caenorhabditis elegans.